The chain runs to 501 residues: NAD(P)H-quinone oxidoreductase chain 4, chloroplastic (501 aa).

A run of 14 helical transmembrane segments spans residues 4–24, 35–55, 84–104, 111–129, 134–154, 168–188, 209–229, 243–263, 273–293, 306–326, 331–351, 387–407, 417–437, and 463–483; these read FPWL…ILFL, YTIC…CYHF, GLSI…TLAA, SRLL…IGSF, LLLF…LLSM, FILY…GMDL, ALEI…SPII, HYST…YGLI, AHSI…IYAA, IAYS…SITD, GAIL…FLAG, LALP…GIIT, ILIT…SLSM, and LFVS…PDFV.

It belongs to the complex I subunit 4 family.

It localises to the plastid. The protein localises to the chloroplast thylakoid membrane. It carries out the reaction a plastoquinone + NADH + (n+1) H(+)(in) = a plastoquinol + NAD(+) + n H(+)(out). The catalysed reaction is a plastoquinone + NADPH + (n+1) H(+)(in) = a plastoquinol + NADP(+) + n H(+)(out). This Buxus microphylla (Littleleaf boxwood) protein is NAD(P)H-quinone oxidoreductase chain 4, chloroplastic.